We begin with the raw amino-acid sequence, 122 residues long: Large ribosomal subunit protein uL14 (122 aa).

It belongs to the universal ribosomal protein uL14 family. As to quaternary structure, part of the 50S ribosomal subunit. Forms a cluster with proteins L3 and L19. In the 70S ribosome, L14 and L19 interact and together make contacts with the 16S rRNA in bridges B5 and B8.

Its function is as follows. Binds to 23S rRNA. Forms part of two intersubunit bridges in the 70S ribosome. The polypeptide is Large ribosomal subunit protein uL14 (Hahella chejuensis (strain KCTC 2396)).